The primary structure comprises 140 residues: Large ribosomal subunit protein uL24 (140 aa).

This sequence belongs to the universal ribosomal protein uL24 family. In terms of assembly, part of the 50S ribosomal subunit.

Functionally, one of two assembly initiator proteins, it binds directly to the 5'-end of the 23S rRNA, where it nucleates assembly of the 50S subunit. Located at the polypeptide exit tunnel on the outside of the subunit. This chain is Large ribosomal subunit protein uL24, found in Nanoarchaeum equitans (strain Kin4-M).